A 268-amino-acid polypeptide reads, in one-letter code: Tryptophan synthase alpha chain (268 aa).

Residues E49 and D60 each act as proton acceptor in the active site.

Belongs to the TrpA family. As to quaternary structure, tetramer of two alpha and two beta chains.

It carries out the reaction (1S,2R)-1-C-(indol-3-yl)glycerol 3-phosphate + L-serine = D-glyceraldehyde 3-phosphate + L-tryptophan + H2O. The protein operates within amino-acid biosynthesis; L-tryptophan biosynthesis; L-tryptophan from chorismate: step 5/5. Its function is as follows. The alpha subunit is responsible for the aldol cleavage of indoleglycerol phosphate to indole and glyceraldehyde 3-phosphate. This is Tryptophan synthase alpha chain from Escherichia coli (strain 55989 / EAEC).